A 155-amino-acid polypeptide reads, in one-letter code: Chromosomal passenger complex protein bir-1 (155 aa).

A BIR repeat occupies 20–87; it reads RLMTFKNFEY…KRDEPCEFVR (68 aa). Cys57, Cys60, His76, and Cys83 together coordinate Zn(2+).

This sequence belongs to the IAP family. As to quaternary structure, component of the CPC complex which consists of icp-1; csc-1; bir-1 and air-2. Within the complex, interacts with csc-1, icp-1 and air-2. Interacts with csc-1 in a zinc-dependent-manner; the interaction is direct. In terms of tissue distribution, expressed in oocytes and sperm.

Its subcellular location is the chromosome. It is found in the cytoplasm. The protein localises to the cytoskeleton. The protein resides in the spindle. It localises to the midbody. Functionally, component of the chromosomal passenger complex (CPC), a complex that acts as a key regulator of chromosome segregation and cytokinesis. The CPC complex has essential functions at the centromere in ensuring correct chromosome condensation, alignment and segregation. In the complex, required to direct the Aurora B/air-2 kinase to chromosomes. Also functions in spindle midzone formation and in the formation of polar bodies during oogenesis. Required for the localization of the kinetochore component hcp-1 to chromosomes. Involved in the positive regulation of transcription. Involved in the transcriptional regulation of collagen genes. In Caenorhabditis elegans, this protein is Chromosomal passenger complex protein bir-1.